The sequence spans 464 residues: ATP synthase subunit beta (464 aa).

Gly-152–Thr-159 provides a ligand contact to ATP.

The protein belongs to the ATPase alpha/beta chains family. As to quaternary structure, F-type ATPases have 2 components, CF(1) - the catalytic core - and CF(0) - the membrane proton channel. CF(1) has five subunits: alpha(3), beta(3), gamma(1), delta(1), epsilon(1). CF(0) has three main subunits: a(1), b(2) and c(9-12). The alpha and beta chains form an alternating ring which encloses part of the gamma chain. CF(1) is attached to CF(0) by a central stalk formed by the gamma and epsilon chains, while a peripheral stalk is formed by the delta and b chains.

The protein localises to the cell membrane. The catalysed reaction is ATP + H2O + 4 H(+)(in) = ADP + phosphate + 5 H(+)(out). Functionally, produces ATP from ADP in the presence of a proton gradient across the membrane. The catalytic sites are hosted primarily by the beta subunits. This Clostridioides difficile (strain 630) (Peptoclostridium difficile) protein is ATP synthase subunit beta.